The chain runs to 360 residues: uncharacterized protein (360 aa).

The interval 193–245 is disordered; the sequence is SRHTRPKGQPLSSPKKNSGSAARPSTAIGLCRRSQTPGALQSTGPSNTELEPE. Composition is skewed to polar residues over residues 202–212 and 225–241; these read PLSSPKKNSGS and RSQT…SNTE.

This is an uncharacterized protein from Homo sapiens (Human).